The primary structure comprises 265 residues: Mlc titration factor A (265 aa).

Zn(2+) contacts are provided by H111, H148, H152, and E211.

It belongs to the MtfA family. In terms of assembly, interacts with Mlc. Zn(2+) is required as a cofactor.

The protein localises to the cytoplasm. In terms of biological role, involved in the modulation of the activity of the glucose-phosphotransferase system (glucose-PTS). Interacts with the transcriptional repressor Mlc, preventing its interaction with DNA and leading to the modulation of expression of genes regulated by Mlc, including ptsG, which encodes the PTS system glucose-specific EIICB component. Functionally, shows zinc-dependent metallopeptidase activity. The polypeptide is Mlc titration factor A (Escherichia coli (strain SMS-3-5 / SECEC)).